The following is a 515-amino-acid chain: MTDKLIIFDTTLRDGEQSPGASMTKEEKIRIAKQLERMKVDVIEAGFAASSNGDFDAIQTIASQVKDSTICSLARANDKDIQRAADALKPANSFRIHTFIATSPLHMEKKLRMTPDQVFEQARLAVRFARKFTDNIEFSPEDGSRSDMDFLCRVLEAVIAEGATTINIADTVGYGVPELYGNLVKTLRERIPNSDKAIFSVHCHNDLGMAVANSLAGVKIGGARQVECTINGLGERAGNTSLEEIVMAVKTRKDYFGLDLGIDTTQIVPASKLVSQITGFVVQPNKAVVGANAFAHASGIHQDGVLKARDTYEIMRAEDVGWTANKIVLGKLSGRNAFKQRLQELGVSLDSEAELNAAFARFKDLADRKAEIFDEDIIAIVTEEESALAQEHEHYKFVSLAQRSETGERPQAKVVFAVDGDEVAGEASGNGPVDATFNAIETEVGSGAELLLYSVNAITTGTQAQGEVTVRLSKSGRIVNGVGTDPDIVAASAKAYIAALNKLYSNADKLNPQRA.

The Pyruvate carboxyltransferase domain maps to 5–268; it reads LIIFDTTLRD…DLGIDTTQIV (264 aa). Residues Asp14, His202, His204, and Asn239 each coordinate Mn(2+). The regulatory domain stretch occupies residues 396–515; that stretch reads KFVSLAQRSE…NADKLNPQRA (120 aa).

It belongs to the alpha-IPM synthase/homocitrate synthase family. LeuA type 1 subfamily. Homodimer. Mn(2+) serves as cofactor.

It localises to the cytoplasm. It catalyses the reaction 3-methyl-2-oxobutanoate + acetyl-CoA + H2O = (2S)-2-isopropylmalate + CoA + H(+). The protein operates within amino-acid biosynthesis; L-leucine biosynthesis; L-leucine from 3-methyl-2-oxobutanoate: step 1/4. Functionally, catalyzes the condensation of the acetyl group of acetyl-CoA with 3-methyl-2-oxobutanoate (2-ketoisovalerate) to form 3-carboxy-3-hydroxy-4-methylpentanoate (2-isopropylmalate). This Burkholderia pseudomallei (strain 1106a) protein is 2-isopropylmalate synthase.